The primary structure comprises 48 residues: Large ribosomal subunit protein bL32 (48 aa).

The protein belongs to the bacterial ribosomal protein bL32 family.

The chain is Large ribosomal subunit protein bL32 from Helicobacter pylori (strain P12).